The following is a 400-amino-acid chain: Tryptophan synthase beta chain (400 aa).

Lysine 90 is subject to N6-(pyridoxal phosphate)lysine.

It belongs to the TrpB family. As to quaternary structure, tetramer of two alpha and two beta chains. Pyridoxal 5'-phosphate serves as cofactor.

It catalyses the reaction (1S,2R)-1-C-(indol-3-yl)glycerol 3-phosphate + L-serine = D-glyceraldehyde 3-phosphate + L-tryptophan + H2O. Its pathway is amino-acid biosynthesis; L-tryptophan biosynthesis; L-tryptophan from chorismate: step 5/5. Its function is as follows. The beta subunit is responsible for the synthesis of L-tryptophan from indole and L-serine. The protein is Tryptophan synthase beta chain (trpB) of Bacillus subtilis (strain 168).